We begin with the raw amino-acid sequence, 222 residues long: Octanoyltransferase (222 aa).

One can recognise a BPL/LPL catalytic domain in the interval 34 to 214; that stretch reads AEAPSTVLLL…EFRKHEEALV (181 aa). Substrate-binding positions include 72 to 79, 144 to 146, and 157 to 159; these read RGGKLTWH, AIG, and GIA. Cys175 (acyl-thioester intermediate) is an active-site residue.

Belongs to the LipB family.

It is found in the cytoplasm. It catalyses the reaction octanoyl-[ACP] + L-lysyl-[protein] = N(6)-octanoyl-L-lysyl-[protein] + holo-[ACP] + H(+). The protein operates within protein modification; protein lipoylation via endogenous pathway; protein N(6)-(lipoyl)lysine from octanoyl-[acyl-carrier-protein]: step 1/2. In terms of biological role, catalyzes the transfer of endogenously produced octanoic acid from octanoyl-acyl-carrier-protein onto the lipoyl domains of lipoate-dependent enzymes. Lipoyl-ACP can also act as a substrate although octanoyl-ACP is likely to be the physiological substrate. The chain is Octanoyltransferase from Arthrobacter sp. (strain FB24).